Here is a 527-residue protein sequence, read N- to C-terminus: UDP-glucuronosyltransferase 2A1 (527 aa).

An N-terminal signal peptide occupies residues 1–20; sequence MLNNLLLFSLQISLIGTTLG. Topologically, residues 21-491 are lumenal; that stretch reads GNVLIWPMEG…TWFQYHSLDV (471 aa). Residues Asn-49, Leu-313, and Asn-347 are each glycosylated (N-linked (GlcNAc...) asparagine). A helical transmembrane segment spans residues 492–512; the sequence is IGFLLVCVTTAIFLVIQCCLF. The Cytoplasmic portion of the chain corresponds to 513 to 527; it reads SCQKFGKIGKKKKRE.

Belongs to the UDP-glycosyltransferase family. In terms of tissue distribution, olfactory epithelium, brain and fetal lung. Not present in liver.

It localises to the membrane. It is found in the endoplasmic reticulum membrane. It catalyses the reaction glucuronate acceptor + UDP-alpha-D-glucuronate = acceptor beta-D-glucuronoside + UDP + H(+). The enzyme catalyses 16beta,17beta-estriol + UDP-alpha-D-glucuronate = 16beta,17beta-estriol 16-O-(beta-D-glucuronate) + UDP + H(+). The catalysed reaction is 16alpha,17alpha-estriol + UDP-alpha-D-glucuronate = 16alpha,17alpha-estriol 16-O-(beta-D-glucuronate) + UDP + H(+). It carries out the reaction 17alpha-estradiol + UDP-alpha-D-glucuronate = 17alpha-estradiol 17-O-(beta-D-glucuronate) + UDP + H(+). It catalyses the reaction 17alpha-estradiol + UDP-alpha-D-glucuronate = 17alpha-estradiol 3-O-(beta-D-glucuronate) + UDP + H(+). The enzyme catalyses 17beta-estradiol + UDP-alpha-D-glucuronate = 17beta-estradiol 3-O-(beta-D-glucuronate) + UDP + H(+). The catalysed reaction is 17beta-estradiol + UDP-alpha-D-glucuronate = 17beta-estradiol 17-O-(beta-D-glucuronate) + UDP + H(+). It carries out the reaction testosterone + UDP-alpha-D-glucuronate = testosterone 17-O-(beta-D-glucuronate) + UDP + H(+). It catalyses the reaction epitestosterone + UDP-alpha-D-glucuronate = epitestosterone 17-O-(beta-D-glucuronate) + UDP + H(+). The enzyme catalyses lithocholate + UDP-alpha-D-glucuronate = lithocholoyl-3-O-(beta-D-glucuronate) + UDP + H(+). The catalysed reaction is lithocholate + UDP-alpha-D-glucuronate = lithocholoyl-24-O-(beta-D-glucuronate) + UDP. It carries out the reaction deoxycholate + UDP-alpha-D-glucuronate = deoxycholoyl-24-O-(beta-D-glucuronate) + UDP. It catalyses the reaction hyodeoxycholate + UDP-alpha-D-glucuronate = hyodeoxycholoyl-24-O-(beta-D-glucuronate) + UDP. The enzyme catalyses hyocholate + UDP-alpha-D-glucuronate = hyocholoyl-24-O-(beta-D-glucuronate) + UDP. In terms of biological role, UDP-glucuronosyltransferase (UGT) that catalyzes phase II biotransformation reactions in which lipophilic substrates are conjugated with glucuronic acid to increase the metabolite's water solubility, thereby facilitating excretion into either the urine or bile. Essential for the elimination and detoxification of drugs, xenobiotics and endogenous compounds. Catalyzes the glucuronidation of endogenous steroid hormones such as androgens (testosterone and epitestosterone) and estrogens (estradiol and epiestriol). Contributes to bile acid (BA) detoxification by catalyzing the glucuronidation of BA substrates, which are natural detergents for dietary lipids absorption. Shows a high affinity to aliphatic odorants such as citronellol as well as olfactory tissue specificity, and therefore may be involved in olfaction. Shows a potential role in detoxification of toxic waste compounds in the amniotic fluid before birth, and air-born chemical after birth. In Homo sapiens (Human), this protein is UDP-glucuronosyltransferase 2A1.